We begin with the raw amino-acid sequence, 378 residues long: Erythronate-4-phosphate dehydrogenase (378 aa).

Substrate contacts are provided by Ser45 and Thr66. NAD(+) contacts are provided by Asp142 and Thr169. Residue Arg202 is part of the active site. Asp226 is a binding site for NAD(+). The active site involves Glu231. The active-site Proton donor is His248. An NAD(+)-binding site is contributed by Gly251. Position 252 (Tyr252) interacts with substrate.

This sequence belongs to the D-isomer specific 2-hydroxyacid dehydrogenase family. PdxB subfamily. In terms of assembly, homodimer.

The protein resides in the cytoplasm. It catalyses the reaction 4-phospho-D-erythronate + NAD(+) = (R)-3-hydroxy-2-oxo-4-phosphooxybutanoate + NADH + H(+). The protein operates within cofactor biosynthesis; pyridoxine 5'-phosphate biosynthesis; pyridoxine 5'-phosphate from D-erythrose 4-phosphate: step 2/5. Its function is as follows. Catalyzes the oxidation of erythronate-4-phosphate to 3-hydroxy-2-oxo-4-phosphonooxybutanoate. This chain is Erythronate-4-phosphate dehydrogenase, found in Cellvibrio japonicus (strain Ueda107) (Pseudomonas fluorescens subsp. cellulosa).